Here is a 347-residue protein sequence, read N- to C-terminus: Protein YIPF3 (347 aa).

A disordered region spans residues 1-28 (MATQAAPASGVRNGAGPEWGGFEENIQG). Residue A2 is modified to N-acetylalanine. Topologically, residues 2 to 145 (ATQAAPASGV…PIKMVNFPQK (144 aa)) are cytoplasmic. The chain crosses the membrane as a helical span at residues 146–166 (VAGELYGPLMLVFTLVAILLH). The Lumenal segment spans residues 167–184 (GMKTSDTIIREGTLMGTA). Residues 185 to 205 (IGTCFGYWLGVSSFIYFLAYL) traverse the membrane as a helical segment. The Cytoplasmic portion of the chain corresponds to 206–211 (CNAQIT). The chain crosses the membrane as a helical span at residues 212-234 (MLQMLALLGYGLFGHCIVLFITY). At 235 to 237 (NIH) the chain is on the lumenal side. The chain crosses the membrane as a helical span at residues 238 to 260 (LHALFYLFWLLLGGLSTLRMVAV). Residues 261 to 271 (LVSRTVGPTQR) lie on the Cytoplasmic side of the membrane. A helical transmembrane segment spans residues 272-292 (LLLCGTLAALHMLFLLYLHFA). The Lumenal portion of the chain corresponds to 293 to 347 (YHKVVEGILDTLEGPNIPPMQRVPRDIPAVLPAAKLPVAVVNATAKAIAVTLQSH). N334 is a glycosylation site (N-linked (GlcNAc...) asparagine).

It belongs to the YIP1 family. Interacts with YIPF4 and YIPF5.

It localises to the cell membrane. Its subcellular location is the golgi apparatus. It is found in the cis-Golgi network membrane. The protein resides in the cytoplasm. Its function is as follows. Involved in the maintenance of the Golgi structure. May play a role in hematopoiesis. The chain is Protein YIPF3 (Yipf3) from Rattus norvegicus (Rat).